Consider the following 211-residue polypeptide: Large ribosomal subunit protein bL25 (211 aa).

Disordered regions lie at residues 1-23 and 191-211; these read MAGE…AARQ and LRSA…AEEV. Residues 196–211 are compositionally biased toward acidic residues; that stretch reads NEADEEETEEATAEEV.

The protein belongs to the bacterial ribosomal protein bL25 family. CTC subfamily. Part of the 50S ribosomal subunit; part of the 5S rRNA/L5/L18/L25 subcomplex. Contacts the 5S rRNA. Binds to the 5S rRNA independently of L5 and L18.

Its function is as follows. This is one of the proteins that binds to the 5S RNA in the ribosome where it forms part of the central protuberance. The polypeptide is Large ribosomal subunit protein bL25 (Dinoroseobacter shibae (strain DSM 16493 / NCIMB 14021 / DFL 12)).